The chain runs to 173 residues: Translation initiation factor IF-3 (173 aa).

This sequence belongs to the IF-3 family. Monomer.

Its subcellular location is the cytoplasm. Functionally, IF-3 binds to the 30S ribosomal subunit and shifts the equilibrium between 70S ribosomes and their 50S and 30S subunits in favor of the free subunits, thus enhancing the availability of 30S subunits on which protein synthesis initiation begins. This is Translation initiation factor IF-3 from Campylobacter lari (strain RM2100 / D67 / ATCC BAA-1060).